The following is a 439-amino-acid chain: Trigger factor (439 aa).

Residues 158–233 (GDVINIEYTI…IKEVLKRTLM (76 aa)) form the PPIase FKBP-type domain. The segment at 410 to 439 (KEISADEPVEEQKEEEEKEEAGSENSENKE) is disordered. A compositionally biased stretch (acidic residues) spans 414–428 (ADEPVEEQKEEEEKE).

It belongs to the FKBP-type PPIase family. Tig subfamily.

It localises to the cytoplasm. It catalyses the reaction [protein]-peptidylproline (omega=180) = [protein]-peptidylproline (omega=0). Functionally, involved in protein export. Acts as a chaperone by maintaining the newly synthesized protein in an open conformation. Functions as a peptidyl-prolyl cis-trans isomerase. In Kosmotoga olearia (strain ATCC BAA-1733 / DSM 21960 / TBF 19.5.1), this protein is Trigger factor.